The primary structure comprises 379 residues: Deoxyuridine 5'-triphosphate nucleotidohydrolase (379 aa).

This sequence belongs to the dUTPase family. Mg(2+) is required as a cofactor.

It carries out the reaction dUTP + H2O = dUMP + diphosphate + H(+). Functionally, involved in nucleotide metabolism: produces dUMP, the immediate precursor of thymidine nucleotides and decreases the intracellular concentration of dUTP to avoid uracil incorporation into viral DNA. The protein is Deoxyuridine 5'-triphosphate nucleotidohydrolase of Human herpesvirus 7 (strain JI) (HHV-7).